A 463-amino-acid chain; its full sequence is Hexose-6-phosphate:phosphate antiporter (463 aa).

Residues 1 to 24 (MLAFLNQVRKPTLDLPLEVRRKMW) lie on the Cytoplasmic side of the membrane. The helical transmembrane segment at 25–45 (FKPFMQSYLVVFIGYLTMYLI) threads the bilayer. Topologically, residues 46 to 60 (RKNFNIAQNDMISTY) are periplasmic. The chain crosses the membrane as a helical span at residues 61–81 (GLSMTQLGMIGLGFSITYGVG). Residues 82–96 (KTLVSYYADGKNTKQ) are Cytoplasmic-facing. The chain crosses the membrane as a helical span at residues 97 to 117 (FLPFMLILSAICMLGFSASMG). Residues 118–120 (SGS) are Periplasmic-facing. The helical transmembrane segment at 121–141 (VSLFLMIAFYALSGFFQSTGG) threads the bilayer. At 142-159 (SCSYSTITKWTPRRKRGT) the chain is on the cytoplasmic side. Residues 160-180 (FLGFWNISHNLGGAGAAGVAL) traverse the membrane as a helical segment. Topologically, residues 181–189 (FGANYLFDG) are periplasmic. The helical transmembrane segment at 190–210 (HVIGMFIFPSIIALIVGFIGL) threads the bilayer. Over 211–259 (RYGSDSPESYGLGKAEELFGEEISEEDKETESTDMTKWQIFVEYVLKNK) the chain is Cytoplasmic. Residues 260-280 (VIWLLCFANIFLYVVRIGIDQ) traverse the membrane as a helical segment. Residues 281 to 297 (WSTVYAFQELKLSKAVA) lie on the Periplasmic side of the membrane. A helical transmembrane segment spans residues 298 to 318 (IQGFTLFEAGALVGTLLWGWL). Residues 319-326 (SDLANGRR) lie on the Cytoplasmic side of the membrane. Residues 327–347 (GLVACIALALIIATLGVYQHA) form a helical membrane-spanning segment. The Periplasmic segment spans residues 348 to 357 (SNEYIYLASL). Residues 358 to 378 (FALGFLVFGPQLLIGVAAVGF) traverse the membrane as a helical segment. The Cytoplasmic portion of the chain corresponds to 379–382 (VPKK). Residues 383 to 403 (AIGAADGIKGTFAYLIGDSFA) traverse the membrane as a helical segment. Residues 404 to 425 (KLGLGMIADGTPVFGLTGWAGT) lie on the Periplasmic side of the membrane. A helical transmembrane segment spans residues 426–446 (FAALDIAAIGCICLMAIVAVM). Topologically, residues 447-463 (EERKIRREKKIQQLTVA) are cytoplasmic.

The protein belongs to the major facilitator superfamily. Organophosphate:Pi antiporter (OPA) (TC 2.A.1.4) family.

The protein localises to the cell inner membrane. Its function is as follows. Mediates the exchange of external hexose 6-phosphate and internal inorganic phosphate. This chain is Hexose-6-phosphate:phosphate antiporter (uhpT), found in Escherichia coli O157:H7.